The sequence spans 314 residues: D-alanine--D-alanine ligase (314 aa).

One can recognise an ATP-grasp domain in the interval 115 to 310 (KQVWQSVGLV…FNELVLEILA (196 aa)). An ATP-binding site is contributed by 141–196 (LDSLGGQGFVKPAHEGSSIGMSVVSTAQELKAAYEKAAHYDAKVLVERRIVGREFT). Positions 264, 277, and 279 each coordinate Mg(2+).

It belongs to the D-alanine--D-alanine ligase family. The cofactor is Mg(2+). Requires Mn(2+) as cofactor.

It localises to the cytoplasm. It carries out the reaction 2 D-alanine + ATP = D-alanyl-D-alanine + ADP + phosphate + H(+). The protein operates within cell wall biogenesis; peptidoglycan biosynthesis. Functionally, cell wall formation. This Saccharophagus degradans (strain 2-40 / ATCC 43961 / DSM 17024) protein is D-alanine--D-alanine ligase.